Here is a 358-residue protein sequence, read N- to C-terminus: UDP-N-acetylglucosamine--N-acetylmuramyl-(pentapeptide) pyrophosphoryl-undecaprenol N-acetylglucosamine transferase (358 aa).

UDP-N-acetyl-alpha-D-glucosamine contacts are provided by Arg166, Ser196, and Gln291.

Belongs to the glycosyltransferase 28 family. MurG subfamily.

The protein localises to the cell membrane. The enzyme catalyses Mur2Ac(oyl-L-Ala-gamma-D-Glu-L-Lys-D-Ala-D-Ala)-di-trans,octa-cis-undecaprenyl diphosphate + UDP-N-acetyl-alpha-D-glucosamine = beta-D-GlcNAc-(1-&gt;4)-Mur2Ac(oyl-L-Ala-gamma-D-Glu-L-Lys-D-Ala-D-Ala)-di-trans,octa-cis-undecaprenyl diphosphate + UDP + H(+). It participates in cell wall biogenesis; peptidoglycan biosynthesis. Its function is as follows. Cell wall formation. Catalyzes the transfer of a GlcNAc subunit on undecaprenyl-pyrophosphoryl-MurNAc-pentapeptide (lipid intermediate I) to form undecaprenyl-pyrophosphoryl-MurNAc-(pentapeptide)GlcNAc (lipid intermediate II). This Staphylococcus saprophyticus subsp. saprophyticus (strain ATCC 15305 / DSM 20229 / NCIMB 8711 / NCTC 7292 / S-41) protein is UDP-N-acetylglucosamine--N-acetylmuramyl-(pentapeptide) pyrophosphoryl-undecaprenol N-acetylglucosamine transferase.